We begin with the raw amino-acid sequence, 573 residues long: Arginine--tRNA ligase (573 aa).

Positions 122 to 132 (PNLAKEMHVGH) match the 'HIGH' region motif.

It belongs to the class-I aminoacyl-tRNA synthetase family. Monomer.

The protein resides in the cytoplasm. The catalysed reaction is tRNA(Arg) + L-arginine + ATP = L-arginyl-tRNA(Arg) + AMP + diphosphate. The polypeptide is Arginine--tRNA ligase (Laribacter hongkongensis (strain HLHK9)).